Consider the following 749-residue polypeptide: Photosystem I P700 chlorophyll a apoprotein A1 (749 aa).

The next 8 membrane-spanning stretches (helical) occupy residues 70–93 (VFSAHFGQLAVIFIWLSGMYFHGA), 156–179 (LYATAIGGLVMATLMLIAGWFHYH), 195–219 (LNHHLAGLLGLGSLSWAGHQIHVSL), 291–309 (TAHHHLAIAVLFIVAGHMY), 346–369 (WHAQLAINLATLGSLTIIVAHHMY), 385–411 (LSLFTHHMWIGGFCVVGAGAHAAIFLV), 433–455 (AIISHLNWVCIFLGFHSFGLYIH), and 531–549 (FLVHHIHAFTIHVTVLILL). Positions 573 and 582 each coordinate [4Fe-4S] cluster. Helical transmembrane passes span 589 to 610 (HVFLGLFWMYNAISVVIFHFSW) and 663 to 685 (LSAYGLVFLGAHFIWAFSLMFLF). Chlorophyll a' is bound at residue histidine 674. Residues methionine 682 and tyrosine 690 each coordinate chlorophyll a. Tryptophan 691 lines the phylloquinone pocket. The chain crosses the membrane as a helical span at residues 723–743 (AVGVAHYLLGGIATTWAFFLA).

The protein belongs to the PsaA/PsaB family. The PsaA/B heterodimer binds the P700 chlorophyll special pair and subsequent electron acceptors. PSI consists of a core antenna complex that captures photons, and an electron transfer chain that converts photonic excitation into a charge separation. The eukaryotic PSI reaction center is composed of at least 11 subunits. P700 is a chlorophyll a/chlorophyll a' dimer, A0 is one or more chlorophyll a, A1 is one or both phylloquinones and FX is a shared 4Fe-4S iron-sulfur center. is required as a cofactor.

It localises to the plastid. The protein resides in the chloroplast thylakoid membrane. The enzyme catalyses reduced [plastocyanin] + hnu + oxidized [2Fe-2S]-[ferredoxin] = oxidized [plastocyanin] + reduced [2Fe-2S]-[ferredoxin]. Functionally, psaA and PsaB bind P700, the primary electron donor of photosystem I (PSI), as well as the electron acceptors A0, A1 and FX. PSI is a plastocyanin-ferredoxin oxidoreductase, converting photonic excitation into a charge separation, which transfers an electron from the donor P700 chlorophyll pair to the spectroscopically characterized acceptors A0, A1, FX, FA and FB in turn. Oxidized P700 is reduced on the lumenal side of the thylakoid membrane by plastocyanin. This chain is Photosystem I P700 chlorophyll a apoprotein A1, found in Zygnema circumcarinatum (Green alga).